The primary structure comprises 102 residues: MAAQKIRIRLKAYDHEVIDSSARKIVETVTRTGAQVAGPVPLPTEKNIYCVIRSPHKYKDSREHFEMRTHKRLIDILDPTPKTVDSLMRLDLPAGVDIEIKL.

This sequence belongs to the universal ribosomal protein uS10 family. In terms of assembly, part of the 30S ribosomal subunit.

Its function is as follows. Involved in the binding of tRNA to the ribosomes. This is Small ribosomal subunit protein uS10 from Frankia alni (strain DSM 45986 / CECT 9034 / ACN14a).